A 240-amino-acid chain; its full sequence is 6-carboxyhexanoate--CoA ligase (240 aa).

Belongs to the BioW family. As to quaternary structure, homodimer. Mg(2+) serves as cofactor.

The catalysed reaction is heptanedioate + ATP + CoA = 6-carboxyhexanoyl-CoA + AMP + diphosphate. Its pathway is metabolic intermediate metabolism; pimeloyl-CoA biosynthesis; pimeloyl-CoA from pimelate: step 1/1. Functionally, catalyzes the transformation of pimelate into pimeloyl-CoA with concomitant hydrolysis of ATP to AMP. This is 6-carboxyhexanoate--CoA ligase from Aquifex aeolicus (strain VF5).